The chain runs to 525 residues: GMP synthase [glutamine-hydrolyzing] (525 aa).

The 199-residue stretch at 9–207 folds into the Glutamine amidotransferase type-1 domain; that stretch reads RILILDFGSQ…VRDICQCEAL (199 aa). Residue Cys86 is the Nucleophile of the active site. Active-site residues include His181 and Glu183. The 193-residue stretch at 208–400 folds into the GMPS ATP-PPase domain; that stretch reads WTPAKIIDDA…LGLPYDMLYR (193 aa). 235–241 serves as a coordination point for ATP; it reads SGGVDSS.

As to quaternary structure, homodimer.

It catalyses the reaction XMP + L-glutamine + ATP + H2O = GMP + L-glutamate + AMP + diphosphate + 2 H(+). Its pathway is purine metabolism; GMP biosynthesis; GMP from XMP (L-Gln route): step 1/1. Catalyzes the synthesis of GMP from XMP. This is GMP synthase [glutamine-hydrolyzing] from Citrobacter koseri (strain ATCC BAA-895 / CDC 4225-83 / SGSC4696).